We begin with the raw amino-acid sequence, 585 residues long: Involucrin (585 aa).

A compositionally biased stretch (polar residues) spans 1–15 (MSQQHTLPVTLSPAL). A disordered region spans residues 1–132 (MSQQHTLPVT…LEEEKKLLDQ (132 aa)). A lipid anchor (Omega-hydroxyceramide glutamate ester) is attached at Gln79. Residues 92–115 (WEQHEEYQKAENPEQQLKQEKTQR) are compositionally biased toward basic and acidic residues. Residues Gln118 and Gln133 are each lipidated (omega-hydroxyceramide glutamate ester). The disordered stretch occupies residues 149–540 (KEQLLELPEQ…KDLEQQKGQL (392 aa)). Tandem repeats lie at residues 153–162 (LELPEQQEGH), 163–172 (LKHLEQQEGQ), 173–182 (LKHPEQQEGQ), 183–192 (LELPEQQEGQ), 193–202 (LELPEQQEGQ), 203–212 (LELPEQQEGQ), 213–222 (LELPEQQEGQ), 223–232 (LELPEQQEGQ), 233–242 (LELPQQQEGQ), 243–252 (LELSEQQEGQ), 253–262 (LELSEQQEGQ), 263–272 (LKHLEHQEGQ), 273–282 (LEVPEEQMGQ), 283–292 (LKYLEQQEGQ), 293–302 (LKHLDQQEKQ), 303–312 (PELPEQQMGQ), 313–322 (LKHLEQQEGQ), 323–332 (PKHLEQQEGQ), 333–342 (LEQLEEQEGQ), 343–352 (LKHLEQQEGQ), 353–362 (LEHLEHQEGQ), 363–372 (LGLPEQQVLQ), and 373–382 (LKQLEKQQGQ). Residues 153-542 (LELPEQQEGH…LEQQKGQLEQ (390 aa)) form a 39 X 10 AA approximate tandem repeats of [LP]-[EKG]-[LHVYQEK]-[PLSQE]-[EQDV]-[QHEKRGA]-Q-[EMVQLP]-[GKLE]-[QHVNLD] region. The span at 159–178 (QEGHLKHLEQQEGQLKHPEQ) shows a compositional bias: basic and acidic residues. Residues 179-261 (QEGQLELPEQ…QLELSEQQEG (83 aa)) are compositionally biased toward low complexity. The segment covering 262–271 (QLKHLEHQEG) has biased composition (basic and acidic residues). Basic and acidic residues-rich tracts occupy residues 292–304 (QLKH…KQPE), 314–328 (KHLE…HLEQ), and 341–360 (GQLK…EHQE). Residues 361–383 (GQLGLPEQQVLQLKQLEKQQGQP) show a composition bias toward low complexity. A 24; approximate repeat occupies 383–392 (PKHLEEEEGQ). The span at 384–393 (KHLEEEEGQL) shows a compositional bias: basic and acidic residues. 11 consecutive repeat copies span residues 393 to 402 (LKHLVQQEGQ), 403 to 412 (LKHLVQQEGQ), 413 to 422 (LEQQERQVEH), 423 to 432 (LEQQVGQLKH), 433 to 442 (LEEQEGQLKH), 443 to 452 (LEQQQGQLEV), 453 to 462 (PEQQVGQPKN), 463 to 472 (LEQEEKQLEL), 473 to 482 (PEQQEGQVKH), 483 to 492 (LEKQEAQLEL), and 493 to 502 (PEQQVGQPKH). Basic and acidic residues-rich tracts occupy residues 415 to 424 (QQERQVEHLE) and 431 to 444 (KHLE…KHLE). The segment covering 445–462 (QQQGQLEVPEQQVGQPKN) has biased composition (low complexity). The span at 479–488 (QVKHLEKQEA) shows a compositional bias: basic and acidic residues. Gln496 is covalently cross-linked (Isoglutamyl lysine isopeptide (Gln-Lys) (interchain with K-? in other proteins)). Residues 501 to 535 (KHLEQQEKHLEHPEQQDGQLKHLEQQEGQLKDLEQ) show a composition bias toward basic and acidic residues. The 36; approximate repeat unit spans residues 503-512 (LEQQEKHLEH). Repeat copies occupy residues 513-522 (PEQQDGQLKH) and 523-532 (LEQQEGQLKD). One copy of the 39; approximate repeat lies at 533–542 (LEQQKGQLEQ).

This sequence belongs to the involucrin family. Directly or indirectly cross-linked to cornifelin (CNFN). Post-translationally, substrate of transglutaminase. Some glutamines and lysines are cross-linked to other involucrin molecules, to other proteins such as keratin, desmoplakin, periplakin and envoplakin, and to lipids like omega-hydroxyceramide. As to expression, keratinocytes of epidermis and other stratified squamous epithelia.

Its subcellular location is the cytoplasm. Functionally, part of the insoluble cornified cell envelope (CE) of stratified squamous epithelia. The chain is Involucrin (IVL) from Homo sapiens (Human).